The sequence spans 338 residues: DNA-directed RNA polymerase subunit alpha (338 aa).

An alpha N-terminal domain (alpha-NTD) region spans residues 1–225 (MLISQRPTIT…ELFGLARELN (225 aa)). The alpha C-terminal domain (alpha-CTD) stretch occupies residues 240-338 (TEYIAAYSMP…YIDVEAEDSE (99 aa)). Positions 319-338 (LEGYDAETGGYIDVEAEDSE) are disordered.

It belongs to the RNA polymerase alpha chain family. Homodimer. The RNAP catalytic core consists of 2 alpha, 1 beta, 1 beta' and 1 omega subunit. When a sigma factor is associated with the core the holoenzyme is formed, which can initiate transcription.

It carries out the reaction RNA(n) + a ribonucleoside 5'-triphosphate = RNA(n+1) + diphosphate. In terms of biological role, DNA-dependent RNA polymerase catalyzes the transcription of DNA into RNA using the four ribonucleoside triphosphates as substrates. This Corynebacterium glutamicum (strain R) protein is DNA-directed RNA polymerase subunit alpha.